A 220-amino-acid chain; its full sequence is Inner membrane-spanning protein YciB (220 aa).

6 helical membrane passes run 20–40 (EVPP…FFFA), 57–77 (IGAP…IALA), 86–106 (LPIM…LTLW), 123–143 (LFGA…GYVF), 156–176 (KLTL…EVVW), and 187–207 (FKVW…MPLI).

This sequence belongs to the YciB family.

Its subcellular location is the cell inner membrane. Plays a role in cell envelope biogenesis, maintenance of cell envelope integrity and membrane homeostasis. The sequence is that of Inner membrane-spanning protein YciB from Brucella anthropi (strain ATCC 49188 / DSM 6882 / CCUG 24695 / JCM 21032 / LMG 3331 / NBRC 15819 / NCTC 12168 / Alc 37) (Ochrobactrum anthropi).